Reading from the N-terminus, the 201-residue chain is Dephospho-CoA kinase (201 aa).

One can recognise a DPCK domain in the interval 4–201; it reads SVGLTGNIAS…KYLREAKIKQ (198 aa). 12–17 is a binding site for ATP; it reads ASGKST.

Belongs to the CoaE family.

The protein resides in the cytoplasm. It catalyses the reaction 3'-dephospho-CoA + ATP = ADP + CoA + H(+). The protein operates within cofactor biosynthesis; coenzyme A biosynthesis; CoA from (R)-pantothenate: step 5/5. Catalyzes the phosphorylation of the 3'-hydroxyl group of dephosphocoenzyme A to form coenzyme A. The polypeptide is Dephospho-CoA kinase (Legionella pneumophila (strain Paris)).